The chain runs to 230 residues: Large ribosomal subunit protein uL1 (230 aa).

This sequence belongs to the universal ribosomal protein uL1 family. As to quaternary structure, part of the 50S ribosomal subunit.

Binds directly to 23S rRNA. The L1 stalk is quite mobile in the ribosome, and is involved in E site tRNA release. In terms of biological role, protein L1 is also a translational repressor protein, it controls the translation of the L11 operon by binding to its mRNA. The protein is Large ribosomal subunit protein uL1 of Gluconobacter oxydans (strain 621H) (Gluconobacter suboxydans).